A 141-amino-acid polypeptide reads, in one-letter code: Nucleoside diphosphate kinase (141 aa).

Lys11, Phe59, Arg87, Thr93, Arg104, and Asn114 together coordinate ATP. His117 acts as the Pros-phosphohistidine intermediate in catalysis.

It belongs to the NDK family. In terms of assembly, homotetramer. Mg(2+) serves as cofactor.

The protein resides in the cytoplasm. It carries out the reaction a 2'-deoxyribonucleoside 5'-diphosphate + ATP = a 2'-deoxyribonucleoside 5'-triphosphate + ADP. It catalyses the reaction a ribonucleoside 5'-diphosphate + ATP = a ribonucleoside 5'-triphosphate + ADP. Its function is as follows. Major role in the synthesis of nucleoside triphosphates other than ATP. The ATP gamma phosphate is transferred to the NDP beta phosphate via a ping-pong mechanism, using a phosphorylated active-site intermediate. The protein is Nucleoside diphosphate kinase of Paraburkholderia phytofirmans (strain DSM 17436 / LMG 22146 / PsJN) (Burkholderia phytofirmans).